Reading from the N-terminus, the 247-residue chain is Granulin (247 aa).

The protein belongs to the polyhedrin family.

Its function is as follows. Component of the virus occlusion bodies, which are large proteinaceous structures, that protect the virus from the outside environment for extended periods until they are ingested by insect larvae. This is Granulin from Agrotis segetum granulosis virus (AsGV).